A 453-amino-acid polypeptide reads, in one-letter code: uncharacterized protein (453 aa).

C74, C80, C83, and C162 together coordinate [4Fe-4S] cluster. S-adenosyl-L-methionine is bound by residues Q286, Y315, E336, and D384. Residue C411 is the Nucleophile of the active site.

It belongs to the class I-like SAM-binding methyltransferase superfamily. RNA M5U methyltransferase family.

This is an uncharacterized protein from Staphylococcus aureus (strain Mu50 / ATCC 700699).